Reading from the N-terminus, the 163-residue chain is MNPRRKKRLTLAVALIVGVAGAASLLLYALNSNLNLFYTPNEIINGKNDTGIKPEIGQRIRIGGMVTMGSMVRDPDSLHVEFAVHDSTGTQVIVTYDDLLPDLFREGQGIVAQGVLTDSGKLEATEVLAKHDENYMPPEVAEAMGKQHKKLEYQEGVEKTAQY.

Residues 1 to 8 (MNPRRKKR) lie on the Cytoplasmic side of the membrane. A helical; Signal-anchor for type II membrane protein transmembrane segment spans residues 9-29 (LTLAVALIVGVAGAASLLLYA). At 30–163 (LNSNLNLFYT…QEGVEKTAQY (134 aa)) the chain is on the periplasmic side. Heme is bound by residues His131 and Tyr135.

This sequence belongs to the CcmE/CycJ family.

Its subcellular location is the cell inner membrane. Its function is as follows. Heme chaperone required for the biogenesis of c-type cytochromes. Transiently binds heme delivered by CcmC and transfers the heme to apo-cytochromes in a process facilitated by CcmF and CcmH. This is Cytochrome c-type biogenesis protein CcmE from Shewanella denitrificans (strain OS217 / ATCC BAA-1090 / DSM 15013).